We begin with the raw amino-acid sequence, 250 residues long: Acetylglutamate kinase (250 aa).

Substrate-binding positions include Gly41–Gly42, Arg63, and Asn156.

Belongs to the acetylglutamate kinase family. ArgB subfamily.

The protein localises to the cytoplasm. The enzyme catalyses N-acetyl-L-glutamate + ATP = N-acetyl-L-glutamyl 5-phosphate + ADP. Its pathway is amino-acid biosynthesis; L-arginine biosynthesis; N(2)-acetyl-L-ornithine from L-glutamate: step 2/4. Its function is as follows. Catalyzes the ATP-dependent phosphorylation of N-acetyl-L-glutamate. The polypeptide is Acetylglutamate kinase (Listeria monocytogenes serovar 1/2a (strain ATCC BAA-679 / EGD-e)).